We begin with the raw amino-acid sequence, 258 residues long: Acyl-[acyl-carrier-protein]--UDP-N-acetylglucosamine O-acyltransferase (258 aa).

It belongs to the transferase hexapeptide repeat family. LpxA subfamily. Homotrimer.

Its subcellular location is the cytoplasm. It carries out the reaction a (3R)-hydroxyacyl-[ACP] + UDP-N-acetyl-alpha-D-glucosamine = a UDP-3-O-[(3R)-3-hydroxyacyl]-N-acetyl-alpha-D-glucosamine + holo-[ACP]. It participates in glycolipid biosynthesis; lipid IV(A) biosynthesis; lipid IV(A) from (3R)-3-hydroxytetradecanoyl-[acyl-carrier-protein] and UDP-N-acetyl-alpha-D-glucosamine: step 1/6. Its function is as follows. Involved in the biosynthesis of lipid A, a phosphorylated glycolipid that anchors the lipopolysaccharide to the outer membrane of the cell. This chain is Acyl-[acyl-carrier-protein]--UDP-N-acetylglucosamine O-acyltransferase, found in Pseudomonas putida (strain ATCC 47054 / DSM 6125 / CFBP 8728 / NCIMB 11950 / KT2440).